Reading from the N-terminus, the 60-residue chain is Large ribosomal subunit protein uL30 (60 aa).

The protein belongs to the universal ribosomal protein uL30 family. In terms of assembly, part of the 50S ribosomal subunit.

This chain is Large ribosomal subunit protein uL30, found in Salinispora arenicola (strain CNS-205).